The primary structure comprises 208 residues: Thymidylate kinase (208 aa).

Residue 11–18 participates in ATP binding; the sequence is GIEGAGKT.

It belongs to the thymidylate kinase family.

It catalyses the reaction dTMP + ATP = dTDP + ADP. In terms of biological role, phosphorylation of dTMP to form dTDP in both de novo and salvage pathways of dTTP synthesis. The polypeptide is Thymidylate kinase (Hahella chejuensis (strain KCTC 2396)).